The primary structure comprises 240 residues: MATDELATKLSRRLQMEGEGGGETPEQPGLNGAAAAAAGAPDEAAEALGSADCELSAKLLRRADLNQGIGEPQSPSRRVFNPYTEFKEFSRKQIKDMEKMFKQYDAGRDGFIDLMELKLMMEKLGAPQTHLGLKNMIKEVDEDFDSKLSFREFLLIFRKAAAGELQEDSGLCVLARLSEIDVSSEGVKGAKSFFEAKVQAINVSSRFEEEIKAEQEERKKQAEEMKQRKAAFKELQSTFK.

The residue at position 2 (alanine 2) is an N-acetylalanine. Serine 11 is subject to Phosphoserine. A disordered region spans residues arginine 13–alanine 38. Residues serine 74 and serine 76 each carry the phosphoserine modification. Residue tyrosine 83 is modified to Phosphotyrosine. 2 consecutive EF-hand domains span residues lysine 92 to proline 127 and glutamine 128 to glycine 163. Ca(2+) is bound by residues aspartate 105, aspartate 109, glutamate 116, aspartate 141, aspartate 143, aspartate 145, lysine 147, and glutamate 152. Lysine 233 is modified (N6-acetyllysine).

Interacts with CASP9; with inactive form. In terms of tissue distribution, found in lymphocytes; preferentially expressed in CD8+ cells.

Its subcellular location is the membrane raft. In terms of biological role, may regulate B-cell receptor (BCR)-induced immature and primary B-cell apoptosis. Plays a role as negative regulator of the canonical NF-kappa-B-activating branch. Controls spontaneous apoptosis through the regulation of BCL2L1 abundance. In Homo sapiens (Human), this protein is EF-hand domain-containing protein D2 (EFHD2).